We begin with the raw amino-acid sequence, 550 residues long: Hydroxylamine reductase (550 aa).

Residues cysteine 7, cysteine 10, cysteine 19, and cysteine 25 each contribute to the [4Fe-4S] cluster site. 8 residues coordinate hybrid [4Fe-2O-2S] cluster: histidine 244, glutamate 268, cysteine 312, cysteine 405, cysteine 433, cysteine 458, glutamate 493, and lysine 495. Residue cysteine 405 is modified to Cysteine persulfide.

It belongs to the HCP family. Requires [4Fe-4S] cluster as cofactor. Hybrid [4Fe-2O-2S] cluster serves as cofactor.

It localises to the cytoplasm. It catalyses the reaction A + NH4(+) + H2O = hydroxylamine + AH2 + H(+). Its function is as follows. Catalyzes the reduction of hydroxylamine to form NH(3) and H(2)O. The polypeptide is Hydroxylamine reductase (Porphyromonas gingivalis (strain ATCC 33277 / DSM 20709 / CIP 103683 / JCM 12257 / NCTC 11834 / 2561)).